The sequence spans 413 residues: Alpha-1-antiproteinase (413 aa).

The N-terminal stretch at 1 to 24 (MTPSISWRLLLLAGLCCLVPSYLA) is a signal peptide. S33 carries the phosphoserine modification. Residues N64, N101, and N265 are each glycosylated (N-linked (GlcNAc...) asparagine). The segment at 368-387 (ATTIVEAVFMSLPPILHFNH) is RCL. The residue at position 378 (S378) is a Phosphoserine.

It belongs to the serpin family. In terms of assembly, interacts with CELA2A. Interacts with ERGIC3 and LMAN1/ERGIC53. Interacts with PRSS1/Trypsin.

It is found in the secreted. In terms of biological role, inhibitor of serine proteases. The primary target is elastase, but also has a moderate affinity for plasmin and thrombin. This is Alpha-1-antiproteinase (Serpina1) from Mus saxicola (Brown spiny mouse).